The chain runs to 305 residues: Ferrochelatase (305 aa).

Positions 182 and 262 each coordinate Fe cation.

It belongs to the ferrochelatase family.

It localises to the cytoplasm. The enzyme catalyses heme b + 2 H(+) = protoporphyrin IX + Fe(2+). The protein operates within porphyrin-containing compound metabolism; protoheme biosynthesis; protoheme from protoporphyrin-IX: step 1/1. Catalyzes the ferrous insertion into protoporphyrin IX. The polypeptide is Ferrochelatase (Herpetosiphon aurantiacus (strain ATCC 23779 / DSM 785 / 114-95)).